The chain runs to 315 residues: tRNA wybutosine-synthesizing protein 5 (315 aa).

In terms of domain architecture, JmjC spans 102–267; the sequence is DEKYYLRSLG…YDKTDTYGNK (166 aa). Tyr-106 is a binding site for 2-oxoglutarate. Fe cation-binding residues include His-160 and Asp-162. Residues Asn-166 and Lys-175 each coordinate 2-oxoglutarate. His-235 provides a ligand contact to Fe cation.

Belongs to the TYW5 family. In terms of assembly, homodimer. The cofactor is Fe(2+).

It catalyses the reaction 7-[(3S)-3-amino-3-carboxypropyl]wyosine(37) in tRNA(Phe) + 2-oxoglutarate + O2 = 7-(2-hydroxy-3-amino-3-carboxypropyl)wyosine(37) in tRNA(Phe) + succinate + CO2. Its pathway is tRNA modification; wybutosine-tRNA(Phe) biosynthesis. In terms of biological role, tRNA hydroxylase that acts as a component of the wybutosine biosynthesis pathway. Wybutosine is a hyper modified guanosine with a tricyclic base found at the 3'-position adjacent to the anticodon of eukaryotic phenylalanine tRNA. Catalyzes the hydroxylation of 7-(a-amino-a-carboxypropyl)wyosine (yW-72) into undermodified hydroxywybutosine (OHyW*). OHyW* being further transformed into hydroxywybutosine (OHyW) by LCMT2/TYW4. OHyW is a derivative of wybutosine found in higher eukaryotes. The protein is tRNA wybutosine-synthesizing protein 5 (TYW5) of Homo sapiens (Human).